Reading from the N-terminus, the 230-residue chain is tRNA (guanine-N(7)-)-methyltransferase (230 aa).

S-adenosyl-L-methionine contacts are provided by Glu-61, Glu-86, Asp-113, and Asp-135. Residue Asp-135 is part of the active site. Residues Lys-139, Asp-171, and 209–212 (TRYE) each bind substrate.

The protein belongs to the class I-like SAM-binding methyltransferase superfamily. TrmB family.

The catalysed reaction is guanosine(46) in tRNA + S-adenosyl-L-methionine = N(7)-methylguanosine(46) in tRNA + S-adenosyl-L-homocysteine. It functions in the pathway tRNA modification; N(7)-methylguanine-tRNA biosynthesis. Catalyzes the formation of N(7)-methylguanine at position 46 (m7G46) in tRNA. In Rhizobium etli (strain ATCC 51251 / DSM 11541 / JCM 21823 / NBRC 15573 / CFN 42), this protein is tRNA (guanine-N(7)-)-methyltransferase.